A 280-amino-acid chain; its full sequence is Extracellular metalloprotease GLRG_06286 (280 aa).

Residues 1–17 form the signal peptide; it reads MQVTFTLVAALAGMASA. Residue asparagine 51 is glycosylated (N-linked (GlcNAc...) asparagine). Residue histidine 196 coordinates Zn(2+). Glutamate 197 is an active-site residue. Histidine 200 is a Zn(2+) binding site. The interval 217–236 is disordered; sequence DSIADTPAQSSPSSGCPVGR. Residues cysteine 232 and cysteine 259 are joined by a disulfide bond.

It belongs to the peptidase M43B family.

The protein resides in the secreted. In terms of biological role, secreted metalloproteinase that allows assimilation of proteinaceous substrates. This is Extracellular metalloprotease GLRG_06286 from Colletotrichum graminicola (strain M1.001 / M2 / FGSC 10212) (Maize anthracnose fungus).